Consider the following 265-residue polypeptide: Glutamate racemase (265 aa).

Substrate contacts are provided by residues Asp-12 to Ser-13 and Tyr-44 to Gly-45. The active-site Proton donor/acceptor is Cys-75. Position 76–77 (Asn-76–Thr-77) interacts with substrate. The active-site Proton donor/acceptor is the Cys-183. A substrate-binding site is contributed by Thr-184–His-185.

It belongs to the aspartate/glutamate racemases family.

The enzyme catalyses L-glutamate = D-glutamate. It functions in the pathway cell wall biogenesis; peptidoglycan biosynthesis. In terms of biological role, provides the (R)-glutamate required for cell wall biosynthesis. This Carboxydothermus hydrogenoformans (strain ATCC BAA-161 / DSM 6008 / Z-2901) protein is Glutamate racemase.